Consider the following 520-residue polypeptide: Probable DNA ligase (520 aa).

Glu-213 serves as a coordination point for ATP. The N6-AMP-lysine intermediate role is filled by Lys-215. The ATP site is built by Arg-220, Arg-235, Glu-264, Phe-300, Arg-372, and Lys-378.

Belongs to the ATP-dependent DNA ligase family. Mg(2+) is required as a cofactor.

It carries out the reaction ATP + (deoxyribonucleotide)n-3'-hydroxyl + 5'-phospho-(deoxyribonucleotide)m = (deoxyribonucleotide)n+m + AMP + diphosphate.. In terms of biological role, DNA ligase that seals nicks in double-stranded DNA during DNA replication, DNA recombination and DNA repair. This is Probable DNA ligase from Mycobacterium sp. (strain JLS).